The primary structure comprises 208 residues: Platelet glycoprotein Ib beta chain (208 aa).

The first 26 residues, 1–26 (MGSGPRGAVSLLLLMLAPPSCPAADC), serve as a signal peptide directing secretion. Disulfide bonds link C26/C32 and C30/C39. An LRRNT domain is found at 27–55 (PAPCSCAGTLVDCGRRGLTWASLPTSFPV). The Extracellular segment spans residues 27–147 (PAPCSCAGTL…RAACAPGPLC (121 aa)). Residues 60–83 (LVLTGNNLTALPSGLLDALPAVRT) form an LRR repeat. The N-linked (GlcNAc...) asparagine glycan is linked to N66. The LRRCT domain occupies 89–143 (NPWRCDCRLVPLRAWLAGRPERAPYRDLRCVAPPAVRGRLLPYLAEDDVRAACAP). 2 disulfides stabilise this stretch: C93-C118 and C95-C141. A helical membrane pass occupies residues 148 to 172 (WGALAAELALLGLGLLHALLLVLLL). Residues 173–208 (CRLRRLRARARARARAALRLSLTDPLVAEQDGTDES) lie on the Cytoplasmic side of the membrane. Phosphoserine; by PKA is present on S193. T195 is subject to Phosphothreonine.

In terms of assembly, two GP-Ib beta are disulfide-linked to one GP-Ib alpha. GP-IX is complexed with the GP-Ib heterodimer via a non covalent linkage. Interacts with TRAF4.

It localises to the membrane. Its function is as follows. Gp-Ib, a surface membrane protein of platelets, participates in the formation of platelet plugs by binding to von Willebrand factor, which is already bound to the subendothelium. The chain is Platelet glycoprotein Ib beta chain (GP1BB) from Papio cynocephalus (Yellow baboon).